We begin with the raw amino-acid sequence, 206 residues long: dTTP/UTP pyrophosphatase (206 aa).

The active-site Proton acceptor is the aspartate 79.

It belongs to the Maf family. YhdE subfamily. Requires a divalent metal cation as cofactor.

The protein resides in the cytoplasm. It carries out the reaction dTTP + H2O = dTMP + diphosphate + H(+). The enzyme catalyses UTP + H2O = UMP + diphosphate + H(+). Nucleoside triphosphate pyrophosphatase that hydrolyzes dTTP and UTP. May have a dual role in cell division arrest and in preventing the incorporation of modified nucleotides into cellular nucleic acids. This is dTTP/UTP pyrophosphatase from Rhizobium meliloti (strain 1021) (Ensifer meliloti).